A 104-amino-acid chain; its full sequence is ATP-dependent Clp protease adapter protein ClpS (104 aa).

It belongs to the ClpS family. Binds to the N-terminal domain of the chaperone ClpA.

In terms of biological role, involved in the modulation of the specificity of the ClpAP-mediated ATP-dependent protein degradation. The sequence is that of ATP-dependent Clp protease adapter protein ClpS from Nitratidesulfovibrio vulgaris (strain ATCC 29579 / DSM 644 / CCUG 34227 / NCIMB 8303 / VKM B-1760 / Hildenborough) (Desulfovibrio vulgaris).